The following is a 107-amino-acid chain: MKTYRIRKDDKVMVIAGKDKGKVGKILKILPKRNAVLVEKVNQVKRHTKANPYAKTPGGIIEKEAPLDISNVALLCEGCAKPAKVGYKYTADGKKVRFCKKCNHEIA.

It belongs to the universal ribosomal protein uL24 family. As to quaternary structure, part of the 50S ribosomal subunit.

One of two assembly initiator proteins, it binds directly to the 5'-end of the 23S rRNA, where it nucleates assembly of the 50S subunit. In terms of biological role, one of the proteins that surrounds the polypeptide exit tunnel on the outside of the subunit. The chain is Large ribosomal subunit protein uL24 from Solidesulfovibrio magneticus (strain ATCC 700980 / DSM 13731 / RS-1) (Desulfovibrio magneticus).